A 495-amino-acid polypeptide reads, in one-letter code: Cardiolipin synthase A (495 aa).

The next 2 helical transmembrane spans lie at Ile9–Thr29 and Met46–Leu66. 2 consecutive PLD phosphodiesterase domains span residues Met227 to Lys254 and Glu408 to Ser435. Catalysis depends on residues His232, Lys234, Asp239, His413, Lys415, and Asp420.

It belongs to the phospholipase D family. Cardiolipin synthase subfamily. ClsA sub-subfamily.

The protein localises to the cell membrane. The enzyme catalyses 2 a 1,2-diacyl-sn-glycero-3-phospho-(1'-sn-glycerol) = a cardiolipin + glycerol. In terms of biological role, catalyzes the reversible phosphatidyl group transfer from one phosphatidylglycerol molecule to another to form cardiolipin (CL) (diphosphatidylglycerol) and glycerol. This Wigglesworthia glossinidia brevipalpis protein is Cardiolipin synthase A.